The chain runs to 194 residues: Adenylate kinase (194 aa).

An ATP-binding site is contributed by 10-15 (GAGKGT). Residues 30–59 (STGDMLRAAVAQQSEIGKRAKAVMDAGQLV) form an NMP region. AMP contacts are provided by residues T31, R36, 57-59 (QLV), 85-88 (GYPR), and Q92. Positions 126 to 142 (SRVAETIAKGGQVRSDD) are LID. R127 lines the ATP pocket. AMP contacts are provided by R139 and R150. A178 contacts ATP.

Belongs to the adenylate kinase family. As to quaternary structure, monomer.

The protein localises to the cytoplasm. The catalysed reaction is AMP + ATP = 2 ADP. Its pathway is purine metabolism; AMP biosynthesis via salvage pathway; AMP from ADP: step 1/1. Functionally, catalyzes the reversible transfer of the terminal phosphate group between ATP and AMP. Plays an important role in cellular energy homeostasis and in adenine nucleotide metabolism. This chain is Adenylate kinase, found in Brucella canis (strain ATCC 23365 / NCTC 10854 / RM-666).